The sequence spans 475 residues: Ammonium transporter Rh type C (475 aa).

Topologically, residues 1 to 20 (MGCVQSFRNFCDRPKNTNVR) are cytoplasmic. A helical membrane pass occupies residues 21 to 41 (ISLPAVCFVWQIAMIILFGVF). Topologically, residues 42-73 (IRYNEEADTHWVEYRKKENISSDIENDFYFRY) are extracellular. A glycan (N-linked (GlcNAc...) asparagine) is linked at asparagine 60. The chain crosses the membrane as a helical span at residues 74-94 (PSFQDVHVMIFVGFGFLMTFL). Residues 95 to 98 (KRYS) lie on the Cytoplasmic side of the membrane. A helical membrane pass occupies residues 99–119 (FGAVGFNFLIAAFGLQWALLM). Residues 120 to 138 (QGWFHSLDYTDGKIKIGIE) are Extracellular-facing. The chain crosses the membrane as a helical span at residues 139-159 (NLINADFCVAGCLIAYGAVLG). Over 160–167 (KVSPVQLM) the chain is Cytoplasmic. Residues 168–188 (VLTLFGITLFAVEEYIILNLI) form a helical membrane-spanning segment. The Extracellular portion of the chain corresponds to 189–193 (HARDA). The helical transmembrane segment at 194–214 (GGSMVIHTFGGYYGLSISWML) threads the bilayer. The Cytoplasmic portion of the chain corresponds to 215-233 (YRPNLEQSSNLQGSVYQSD). The chain crosses the membrane as a helical span at residues 234–254 (VFAMIGTLFLWMFWPSFNSAI). Over 255–265 (TDHGDGQHRAA) the chain is Extracellular. Residues 266 to 286 (INTYLALASTVLTTVAISSLF) traverse the membrane as a helical segment. Over 287-299 (QKHGKLDMVHIQN) the chain is Cytoplasmic. A helical transmembrane segment spans residues 300–320 (STLAGGVAVGTAAEFMLMPYG). A topological domain (extracellular) is located at residue serine 321. The chain crosses the membrane as a helical span at residues 322 to 342 (LIVGFCCGIISTLGYIYLTPF). The Cytoplasmic segment spans residues 343–357 (MEKYLKIQDTCGIHN). The chain crosses the membrane as a helical span at residues 358-378 (LHAMPGLIGGIVGAITAAAAT). Topologically, residues 379-410 (ESVYGKEGLVNTFDFVGPFKNMVPTTQGGHQA) are extracellular. The chain crosses the membrane as a helical span at residues 411–431 (AGLCVAICFGIGGGIMVGCIL). Topologically, residues 432 to 475 (RLPIWCDPADDNCFNDEPYWELPEEEEIIPPILHYNNHMVNKDV) are cytoplasmic.

The protein belongs to the ammonium transporter (TC 2.A.49) family. Rh subfamily. Homotrimer.

It localises to the apical cell membrane. Functionally, functions as an ammonia transporter. May play a role in the elimination of ammonia in the gill. The protein is Ammonium transporter Rh type C (rhcg) of Tetraodon nigroviridis (Spotted green pufferfish).